A 51-amino-acid chain; its full sequence is Glutamine synthetase (51 aa).

It belongs to the glutamine synthetase family. As to quaternary structure, homooctamer.

It localises to the cytoplasm. It carries out the reaction L-glutamate + NH4(+) + ATP = L-glutamine + ADP + phosphate + H(+). The protein is Glutamine synthetase of Vitis sp. (Grape).